An 875-amino-acid polypeptide reads, in one-letter code: Leucine--tRNA ligase (875 aa).

A 'HIGH' region motif is present at residues 43–53 (PYPSGRIHMGH). The 'KMSKS' region motif lies at 633 to 637 (KMSKS). Lys636 provides a ligand contact to ATP.

Belongs to the class-I aminoacyl-tRNA synthetase family.

Its subcellular location is the cytoplasm. It carries out the reaction tRNA(Leu) + L-leucine + ATP = L-leucyl-tRNA(Leu) + AMP + diphosphate. The sequence is that of Leucine--tRNA ligase from Bartonella bacilliformis (strain ATCC 35685 / KC583 / Herrer 020/F12,63).